Here is a 343-residue protein sequence, read N- to C-terminus: F17g-G fimbrial adhesin (343 aa).

The first 22 residues, 1-22 (MTNFYKVCLAVFILVCCNISHA), serve as a signal peptide directing secretion. Residues 23-199 (AVSFIGSTEN…LNPFTLNDTV (177 aa)) form a receptor-binding lectin domain region. Residues 65–66 (AN), 110–111 (DT), and 138–141 (STQG) contribute to the a carbohydrate site. A disulfide bond links Cys75 and Cys132. Residues 200 to 343 (TSCRLLTPSA…GISTFTFSYQ (144 aa)) form a fimbrillin-binding domain region. Residues 287 to 307 (LKFGPDSPVKGNENQWQLSTG) are disordered. Residues 298–307 (NENQWQLSTG) show a composition bias toward polar residues.

This sequence belongs to the fimbrial protein family.

It localises to the fimbrium. In terms of biological role, essential fimbrial adhesion factor that mediates binding to N-acetylglucosamine-containing receptors in the host intestinal microvilli, leading to colonization of the intestinal tissue, and diarrhea or septicemia. Also confers adhesiveness to laminin and basement membranes. May be involved in the initiation of polymerization of fimbrillin monomers during fimbrial filament biogenesis. This is F17g-G fimbrial adhesin (f17gG) from Escherichia coli.